A 914-amino-acid chain; its full sequence is Zinc finger protein 717 (914 aa).

One can recognise a KRAB domain in the interval 22-93 (VSFEEVAVHF…EETPNLRLSA (72 aa)). The C2H2-type 1; degenerate zinc-finger motif lies at 209 to 231 (FQCNEQGKTFNTEAMFFIHKRVH). The segment at 266-277 (RKSDFTKHQQTH) adopts a C2H2-type 2; degenerate zinc-finger fold. A C2H2-type 3; degenerate zinc finger spans residues 283-305 (YECVECEKPSISKSDLMLQCKMP). 12 C2H2-type zinc fingers span residues 311 to 333 (YACNWCEKLFSYKSSLIIHQRIH), 339 to 361 (YGCNECGKTFRRKSFLTLHERTH), 367 to 389 (YKCIECGKTFHCKSLLTLHHRTH), 395 to 417 (YQCSECGKTFSQKSYLTIHHRTH), 423 to 445 (YACDHCEEAFSHKSRLTVHQRTH), 451 to 473 (YECNECGKPFINKSNLRLHQRTH), 479 to 501 (YECNECGKTFHRKSFLTIHQWTH), 507 to 529 (YECNECGKTFRCKSFLTVHQRTH), 535 to 557 (YACNECGKTYSHKSYLTVHHRTH), 563 to 585 (YECNECGKSFHCKSFLTIHQRTH), 591 to 613 (YECNECEKTFINKLNLGIHKRTH), and 619 to 641 (YECNECGKTFRQKSNLSTHQGTH). The C2H2-type 16; degenerate zinc-finger motif lies at 649 to 669 (CNECGKTFHRKSFLTIHQRTH). Residues 741-752 (QKSVLTVHHRTH) form a C2H2-type 17; degenerate zinc finger. C2H2-type zinc fingers lie at residues 758–780 (YECNECGKTFCHKSNLSTHQGTH), 786–808 (YECDECRKTFYDKTVLTIHQRTH), 814–836 (FECKECRKTFSQKSKLFVHHRTH), 842–864 (FRCNECRKTFSQKSGLSIHQRTH), and 870–892 (YECKECGKTFCQKSHLSRHQQTH).

It belongs to the krueppel C2H2-type zinc-finger protein family.

It is found in the nucleus. Its function is as follows. May be involved in transcriptional regulation. The chain is Zinc finger protein 717 from Homo sapiens (Human).